The primary structure comprises 331 residues: 4-hydroxythreonine-4-phosphate dehydrogenase (331 aa).

Positions 137 and 138 each coordinate substrate. Residues His-167, His-212, and His-267 each contribute to the a divalent metal cation site. Residues Lys-275, Asn-284, and Arg-293 each coordinate substrate.

Belongs to the PdxA family. In terms of assembly, homodimer. It depends on Zn(2+) as a cofactor. Mg(2+) is required as a cofactor. Requires Co(2+) as cofactor.

It is found in the cytoplasm. The enzyme catalyses 4-(phosphooxy)-L-threonine + NAD(+) = 3-amino-2-oxopropyl phosphate + CO2 + NADH. It functions in the pathway cofactor biosynthesis; pyridoxine 5'-phosphate biosynthesis; pyridoxine 5'-phosphate from D-erythrose 4-phosphate: step 4/5. Functionally, catalyzes the NAD(P)-dependent oxidation of 4-(phosphooxy)-L-threonine (HTP) into 2-amino-3-oxo-4-(phosphooxy)butyric acid which spontaneously decarboxylates to form 3-amino-2-oxopropyl phosphate (AHAP). The sequence is that of 4-hydroxythreonine-4-phosphate dehydrogenase from Yersinia pseudotuberculosis serotype I (strain IP32953).